Reading from the N-terminus, the 423-residue chain is Putative transmembrane protein ORF103 (423 aa).

Basic and acidic residues predominate over residues 43-57; that stretch reads EPKIEQEEPQQKPEV. The disordered stretch occupies residues 43–91; sequence EPKIEQEEPQQKPEVVDVYSNETDKNEEEVSIITSEDEEEDEKGMLFKR. Residues 67–84 are compositionally biased toward acidic residues; it reads KNEEEVSIITSEDEEEDE. A run of 2 helical transmembrane segments spans residues 125-145 and 162-182; these read IIGI…VAVL and FSLC…GLAI. The disordered stretch occupies residues 253–282; it reads DESGSEVSSEDEESDQETLLRNRKMPTNSK. 2 helical membrane-spanning segments follow: residues 326–346 and 366–386; these read LISA…IVGS and IPTL…MCVL.

The protein resides in the host membrane. This is Putative transmembrane protein ORF103 from Magallana gigas (Pacific oyster).